We begin with the raw amino-acid sequence, 301 residues long: Heat shock factor protein HSF24 (301 aa).

A DNA-binding region spans residues 7 to 101 (PAPFLLKTYQ…LLTAIRRRKT (95 aa)). 2 disordered regions span residues 103 to 160 (TSTP…DENE) and 221 to 244 (GVKD…DEKG). Low complexity predominate over residues 107-142 (AGGKSVAAGASASPDNSGDDIGSSSTSSPDSKNPGS). Positions 233-243 (DNDDKEDDDEK) are enriched in acidic residues.

The protein belongs to the HSF family. Homotrimer. Post-translationally, exhibits temperature-dependent phosphorylation.

The protein localises to the nucleus. DNA-binding protein that specifically binds heat shock promoter elements (HSE) and activates transcription. This Solanum peruvianum (Peruvian tomato) protein is Heat shock factor protein HSF24 (HSF24).